Here is a 207-residue protein sequence, read N- to C-terminus: Protein-L-isoaspartate O-methyltransferase (207 aa).

Ser56 is a catalytic residue.

It belongs to the methyltransferase superfamily. L-isoaspartyl/D-aspartyl protein methyltransferase family.

It localises to the cytoplasm. The catalysed reaction is [protein]-L-isoaspartate + S-adenosyl-L-methionine = [protein]-L-isoaspartate alpha-methyl ester + S-adenosyl-L-homocysteine. Functionally, catalyzes the methyl esterification of L-isoaspartyl residues in peptides and proteins that result from spontaneous decomposition of normal L-aspartyl and L-asparaginyl residues. It plays a role in the repair and/or degradation of damaged proteins. The sequence is that of Protein-L-isoaspartate O-methyltransferase from Pyrobaculum neutrophilum (strain DSM 2338 / JCM 9278 / NBRC 100436 / V24Sta) (Thermoproteus neutrophilus).